The primary structure comprises 663 residues: Alpha-1,4-glucan:maltose-1-phosphate maltosyltransferase (663 aa).

A disordered region spans residues 238–266; sequence IGETNRKGPDDAPEAGPDDPGSPWAIGGF. Alpha-maltose 1-phosphate contacts are provided by Lys244, Gln309, and Asp344. Asp380 (nucleophile) is an active-site residue. Residue Asn381 participates in alpha-maltose 1-phosphate binding. The active-site Proton donor is Glu409. 521–522 serves as a coordination point for alpha-maltose 1-phosphate; sequence KY.

Belongs to the glycosyl hydrolase 13 family. GlgE subfamily. As to quaternary structure, homodimer.

The enzyme catalyses alpha-maltose 1-phosphate + [(1-&gt;4)-alpha-D-glucosyl](n) = [(1-&gt;4)-alpha-D-glucosyl](n+2) + phosphate. Functionally, maltosyltransferase that uses maltose 1-phosphate (M1P) as the sugar donor to elongate linear or branched alpha-(1-&gt;4)-glucans. Is involved in a branched alpha-glucan biosynthetic pathway from trehalose, together with TreS, Mak and GlgB. The chain is Alpha-1,4-glucan:maltose-1-phosphate maltosyltransferase from Salinibacter ruber (strain DSM 13855 / M31).